The sequence spans 373 residues: MKLLSVLALSATATSVLGASIPVDTRAEKFLIELAPGETRWVTEEEKWELKRKGQDFFDITDEEVGFTAAVTQPAIAYPTSIRHADAVNAMIATLSKENMQRDLTKLSSFHNRYYKADFGKQSATWLQEQVQAAINTAGASRYGAKVVSFRHNWAQHSIVATIPGRSPEIVVVGAHQDSINQRSPMTGRAPGADDNGSGSVTILEALRGVLQDQTIVQGKAANTIEFHWYAGEEAGLLGSQAIFANYKQTGKKVKGMLNQDMTGYIKGMVDKGLKVSFGIITDNVNANLTKFVRMIISKYCSIPTIDTRCGYACSDHASANRNGYPSAMVAESPIDLLDPHLHTDSDTIDYLDFDHMIEHAKLIVGFVTELAK.

The first 18 residues, 1 to 18, serve as a signal peptide directing secretion; it reads MKLLSVLALSATATSVLG. Residues His176 and Asp195 each coordinate Zn(2+). Asn196 is a glycosylation site (N-linked (GlcNAc...) asparagine). Glu234 and Asp261 together coordinate Zn(2+). An N-linked (GlcNAc...) asparagine glycan is attached at Asn288. Cysteines 310 and 314 form a disulfide. His343 contributes to the Zn(2+) binding site.

This sequence belongs to the peptidase M28 family. M28E subfamily. As to quaternary structure, monomer. It depends on Zn(2+) as a cofactor.

It is found in the secreted. In terms of biological role, extracellular aminopeptidase which contributes to pathogenicity. The sequence is that of Probable leucine aminopeptidase 1 (LAP1) from Trichophyton verrucosum (strain HKI 0517).